The chain runs to 498 residues: Glycerol kinase (498 aa).

Threonine 14 lines the ADP pocket. Threonine 14, threonine 15, and serine 16 together coordinate ATP. Residue threonine 14 coordinates sn-glycerol 3-phosphate. Arginine 18 contributes to the ADP binding site. 4 residues coordinate sn-glycerol 3-phosphate: arginine 84, glutamate 85, tyrosine 136, and aspartate 245. Glycerol is bound by residues arginine 84, glutamate 85, tyrosine 136, aspartate 245, and glutamine 246. Positions 267 and 310 each coordinate ADP. Threonine 267, glycine 310, glutamine 314, and glycine 410 together coordinate ATP. ADP is bound by residues glycine 410 and asparagine 414.

It belongs to the FGGY kinase family.

It carries out the reaction glycerol + ATP = sn-glycerol 3-phosphate + ADP + H(+). Its pathway is polyol metabolism; glycerol degradation via glycerol kinase pathway; sn-glycerol 3-phosphate from glycerol: step 1/1. With respect to regulation, inhibited by fructose 1,6-bisphosphate (FBP). Key enzyme in the regulation of glycerol uptake and metabolism. Catalyzes the phosphorylation of glycerol to yield sn-glycerol 3-phosphate. The protein is Glycerol kinase of Rhodospirillum centenum (strain ATCC 51521 / SW).